We begin with the raw amino-acid sequence, 79 residues long: Delta-hormotoxin-Cpt1b (79 aa).

The signal sequence occupies residues 1 to 20; sequence MKTQVLALFVLCVLFCLAES. Positions 21–31 are excised as a propeptide; that stretch reads RTTLNKRNDIE. Intrachain disulfides connect Cys-36/Cys-75, Cys-38/Cys-66, and Cys-56/Cys-76.

Belongs to the sea anemone sodium channel inhibitory toxin family.

It is found in the secreted. Its subcellular location is the nematocyst. In terms of biological role, in neuromuscular preparation of crustaceans, the toxin increased neurotransmitter release, causing repetitive firing of the axons. May affect sodium channels (Nav). This is Delta-hormotoxin-Cpt1b from Calliactis parasitica (Sea anemone).